Consider the following 132-residue polypeptide: Movement protein TGB3 (132 aa).

Residues 1–11 lie on the Cytoplasmic side of the membrane; it reads MVLVVKVDLSN. A helical membrane pass occupies residues 12–32; it reads IVLYIVAGCVVVSMLYSPFFS. At 33-109 the chain is on the lumenal side; the sequence is NDVKASSYAG…TETLFIILSR (77 aa). A helical transmembrane segment spans residues 110-130; that stretch reads LFGLAVFLFMICLMSIVWFWC. Residues 131–132 are Cytoplasmic-facing; that stretch reads HR.

It belongs to the benyvirus TGB3 movement protein family. Interacts with movement proteins TGB1 and TGB2.

It is found in the host cell junction. The protein resides in the host plasmodesma. It localises to the host endoplasmic reticulum membrane. Participates in the transport of viral RNA to the plasmodesmata. TGBp3 most probably contains signals of plasmodesmata targeting is therefore involved in the targeting of TGBp2, and viral RNAs-TGBp1 (RNP complex), to plasmodesmata. Can gate plasmodesmata and increase their size exclusion limit. The sequence is that of Movement protein TGB3 from Beta macrocarpa (Beet).